We begin with the raw amino-acid sequence, 315 residues long: Ribosomal RNA small subunit methyltransferase H (315 aa).

Residues G61–H63, D80, F108, D124, and Q131 each bind S-adenosyl-L-methionine. The disordered stretch occupies residues P291–L315. Positions R301–L315 are enriched in basic residues.

It belongs to the methyltransferase superfamily. RsmH family.

The protein localises to the cytoplasm. It carries out the reaction cytidine(1402) in 16S rRNA + S-adenosyl-L-methionine = N(4)-methylcytidine(1402) in 16S rRNA + S-adenosyl-L-homocysteine + H(+). Specifically methylates the N4 position of cytidine in position 1402 (C1402) of 16S rRNA. The protein is Ribosomal RNA small subunit methyltransferase H of Crocosphaera subtropica (strain ATCC 51142 / BH68) (Cyanothece sp. (strain ATCC 51142)).